A 382-amino-acid polypeptide reads, in one-letter code: Putative oxidoreductase C1F5.03c (382 aa).

A helical membrane pass occupies residues 7 to 27 (IVIVGGGITGVSCLYFLAHHP).

The protein belongs to the TDA3 family.

Its subcellular location is the cytoplasm. The protein resides in the membrane. Functionally, putative oxidoreductase that negatively regulates the retrieval of cargo from late endosomes to the Golgi. The chain is Putative oxidoreductase C1F5.03c from Schizosaccharomyces pombe (strain 972 / ATCC 24843) (Fission yeast).